The primary structure comprises 255 residues: Small ribosomal subunit protein eS4 (255 aa).

The region spanning 43–115 is the S4 RNA-binding domain; sequence IPLLILVRDV…PTRFFTLHPI (73 aa).

The protein belongs to the eukaryotic ribosomal protein eS4 family.

In Hyperthermus butylicus (strain DSM 5456 / JCM 9403 / PLM1-5), this protein is Small ribosomal subunit protein eS4.